A 413-amino-acid chain; its full sequence is ATP-dependent (S)-NAD(P)H-hydrate dehydratase (413 aa).

The region spanning 98–402 is the YjeF C-terminal domain; the sequence is NLNHFLSYVP…KSVPNALVWG (305 aa). (6S)-NADPHX is bound by residues G199 and 252–258; that span reads NFVEYRA. ATP contacts are provided by residues 292 to 296 and 311 to 320; these read KGQED and GMPRRCGGQG. Position 321 (D321) interacts with (6S)-NADPHX.

It belongs to the NnrD/CARKD family. Requires Mg(2+) as cofactor.

It carries out the reaction (6S)-NADHX + ATP = ADP + phosphate + NADH + H(+). It catalyses the reaction (6S)-NADPHX + ATP = ADP + phosphate + NADPH + H(+). Functionally, catalyzes the dehydration of the S-form of NAD(P)HX at the expense of ATP, which is converted to ADP. Together with NAD(P)HX epimerase, which catalyzes the epimerization of the S- and R-forms, the enzyme allows the repair of both epimers of NAD(P)HX, a damaged form of NAD(P)H that is a result of enzymatic or heat-dependent hydration. This chain is ATP-dependent (S)-NAD(P)H-hydrate dehydratase, found in Heterostelium pallidum (strain ATCC 26659 / Pp 5 / PN500) (Cellular slime mold).